The following is a 201-amino-acid chain: IDLSRF-like peptide (201 aa).

The first 28 residues, 1–28, serve as a signal peptide directing secretion; that stretch reads MVRRFCNGAVALGIALTACAAFPRAIMA. Positions 43–201 are excised as a propeptide; it reads SDACHPYEPF…EKLVKTGFLD (159 aa). Residues 45-85 enclose the LDL-receptor class A domain; the sequence is ACHPYEPFKCPGDGLCISIQYLCDGAPDCQDGYDEDSRLCT. Intrachain disulfides connect Cys-46–Cys-60, Cys-54–Cys-73, and Cys-67–Cys-84.

Expressed in central brain, antennal and optical lobes, in gnathal, thoracic and abdominal ganglia and in the retrocerebral complex (at protein level).

The protein localises to the secreted. This is IDLSRF-like peptide from Camponotus floridanus (Florida carpenter ant).